A 183-amino-acid chain; its full sequence is BLOC-1-related complex subunit 8 homolog (183 aa).

The segment at 152 to 183 (MIGPGTATGRTEAQAATSSNPGELQRSYTTLH) is disordered. Over residues 159–183 (TGRTEAQAATSSNPGELQRSYTTLH) the composition is skewed to polar residues.

This sequence belongs to the BORCS8 family.

The protein localises to the lysosome membrane. Its function is as follows. May participate in the coupling of lysosomes to microtubule plus-end-directed kinesin motor. The polypeptide is BLOC-1-related complex subunit 8 homolog (Drosophila melanogaster (Fruit fly)).